A 624-amino-acid chain; its full sequence is ATP-dependent RNA helicase MRH4, mitochondrial (624 aa).

The transit peptide at 1-43 directs the protein to the mitochondrion; sequence MSPVASTCLLCEMRTVVWGWQPAVPQPWHFVRFASSARLARRK. The disordered stretch occupies residues 41 to 120; it reads RRKPARMALS…KDAADKKQDG (80 aa). Positions 86–119 are enriched in basic and acidic residues; that stretch reads RLPDRPIPRSDAELKRSSSDLNNKEKDAADKKQD. Positions 151–184 match the Q motif motif; it reads TSFDQFPLLPQVREAVYANAFPTLTEISPTPIQR. Residues 212 to 427 enclose the Helicase ATP-binding domain; it reads EEELFHFDQF…EKKFPEMKRL (216 aa). 225–232 is a binding site for ATP; the sequence is AETGTGKT. The short motif at 374-377 is the DEAD box element; that stretch reads DEAD. A Helicase C-terminal domain is found at 438 to 624; the sequence is RVQLGVVDVD…EAMFRGQALI (187 aa).

This sequence belongs to the DEAD box helicase family. MRH4 subfamily.

The protein resides in the mitochondrion. The catalysed reaction is ATP + H2O = ADP + phosphate + H(+). ATP-binding RNA helicase involved in mitochondrial RNA metabolism. Required for maintenance of mitochondrial DNA. The protein is ATP-dependent RNA helicase MRH4, mitochondrial (MRH4) of Ajellomyces capsulatus (strain NAm1 / WU24) (Darling's disease fungus).